Reading from the N-terminus, the 255-residue chain is MRFNMTTTLFSPAEFEQALRDKGRYYHIHHPYHIMMNDGHATKQQIQGWVANRFYYQVNIPLKDAAIMANCPDPATRRKWVQRILDHDGQHDDHGGIEAWLRLGEAVGLDRETILSQKMVLPSVRFAVDAYVNFARRACWQEAACSSLTELFAPAIHQSRLDTWPTHYPWIDAEGYAYFRGRLSQANRDVEHGLELALEYCNTVDRQQRMLNILQFKLDILWTILDGMSMAYVLERAPYHTVTQEAVWHQKGLLG.

This sequence belongs to the PqqC family.

It catalyses the reaction 6-(2-amino-2-carboxyethyl)-7,8-dioxo-1,2,3,4,7,8-hexahydroquinoline-2,4-dicarboxylate + 3 O2 = pyrroloquinoline quinone + 2 H2O2 + 2 H2O + H(+). It participates in cofactor biosynthesis; pyrroloquinoline quinone biosynthesis. Its function is as follows. Ring cyclization and eight-electron oxidation of 3a-(2-amino-2-carboxyethyl)-4,5-dioxo-4,5,6,7,8,9-hexahydroquinoline-7,9-dicarboxylic-acid to PQQ. The polypeptide is Pyrroloquinoline-quinone synthase (Acinetobacter baylyi (strain ATCC 33305 / BD413 / ADP1)).